A 291-amino-acid polypeptide reads, in one-letter code: uncharacterized protein (291 aa).

A disordered region spans residues 1–55 (MRTHDIPRSPLVGHKKNAAPDGIGASRACCPARENEPFKKGSTNSRGGGVEWSRS). 2 helical membrane-spanning segments follow: residues 74-96 (WWAV…PVHA) and 188-210 (YYYL…RIRL).

It to T.pallidum TP_0733.

It localises to the cell membrane. This is an uncharacterized protein from Treponema pallidum (strain Nichols).